The sequence spans 344 residues: Dihydroorotate dehydrogenase (quinone) (344 aa).

Residues Ala65 to Lys69 and Thr89 contribute to the FMN site. Lys69 is a substrate binding site. Asn114–Phe118 provides a ligand contact to substrate. FMN is bound by residues Asn145 and Asn178. Residue Asn178 coordinates substrate. Ser181 (nucleophile) is an active-site residue. Substrate is bound at residue Asn183. FMN contacts are provided by Lys223 and Thr251. Asn252 to Thr253 contributes to the substrate binding site. FMN contacts are provided by residues Gly274, Gly303, and Tyr324 to Thr325.

The protein belongs to the dihydroorotate dehydrogenase family. Type 2 subfamily. As to quaternary structure, monomer. FMN serves as cofactor.

Its subcellular location is the cell membrane. It catalyses the reaction (S)-dihydroorotate + a quinone = orotate + a quinol. It functions in the pathway pyrimidine metabolism; UMP biosynthesis via de novo pathway; orotate from (S)-dihydroorotate (quinone route): step 1/1. Catalyzes the conversion of dihydroorotate to orotate with quinone as electron acceptor. The chain is Dihydroorotate dehydrogenase (quinone) from Ralstonia nicotianae (strain ATCC BAA-1114 / GMI1000) (Ralstonia solanacearum).